The primary structure comprises 403 residues: Cytoplasmic tRNA 2-thiolation protein 2 (403 aa).

Belongs to the CTU2/NCS2 family.

It localises to the cytoplasm. Its pathway is tRNA modification; 5-methoxycarbonylmethyl-2-thiouridine-tRNA biosynthesis. Functionally, plays a central role in 2-thiolation of mcm(5)S(2)U at tRNA wobble positions of tRNA(Lys), tRNA(Glu) and tRNA(Gln). May act by forming a heterodimer with NCS6/CTU1 that ligates sulfur from thiocarboxylated URM1 onto the uridine of tRNAs at wobble position. This Drosophila willistoni (Fruit fly) protein is Cytoplasmic tRNA 2-thiolation protein 2.